The chain runs to 217 residues: Protein canopy 4 (217 aa).

Positions 1-27 are cleaved as a signal peptide; the sequence is MEMFTVFLFYMFSLVLANQEERLPNKC. 3 cysteine pairs are disulfide-bonded: Cys-27–Cys-185, Cys-30–Cys-173, and Cys-83–Cys-145. Residues 194–217 form a disordered region; it reads MGMKGSEEESEGKDGKETHDAGEL. Over residues 205 to 217 the composition is skewed to basic and acidic residues; sequence GKDGKETHDAGEL.

This sequence belongs to the canopy family.

The protein resides in the secreted. This Danio rerio (Zebrafish) protein is Protein canopy 4 (cnpy4).